A 98-amino-acid polypeptide reads, in one-letter code: Large ribosomal subunit protein uL23 (98 aa).

The protein belongs to the universal ribosomal protein uL23 family. In terms of assembly, part of the 50S ribosomal subunit. Contacts protein L29, and trigger factor when it is bound to the ribosome.

Functionally, one of the early assembly proteins it binds 23S rRNA. One of the proteins that surrounds the polypeptide exit tunnel on the outside of the ribosome. Forms the main docking site for trigger factor binding to the ribosome. The protein is Large ribosomal subunit protein uL23 of Lactobacillus delbrueckii subsp. bulgaricus (strain ATCC 11842 / DSM 20081 / BCRC 10696 / JCM 1002 / NBRC 13953 / NCIMB 11778 / NCTC 12712 / WDCM 00102 / Lb 14).